We begin with the raw amino-acid sequence, 204 residues long: MEKSPRYRDKAKNLLPSPSSCTTTPTRYVKDDMYETTFIRTDPSSFKQVVQLLTGIPKNPTHQPDPRFPPFHSIPPIKAVTNKKQSSSFRLSERRNSMKHYLNINPTHSGPPEILTPTILNFPALDLSPDTPLMSDPFYRPGSFSQSPSDSKPSFDDDQERSIKEKGFYLRPSPSTTPRDTEPRLLSLFPMTPIHSPAPSPHDH.

Basic and acidic residues predominate over residues 1–12; it reads MEKSPRYRDKAK. Residues 1 to 26 form a disordered region; the sequence is MEKSPRYRDKAKNLLPSPSSCTTTPT. Positions 16-26 are enriched in low complexity; the sequence is PSPSSCTTTPT. Ser-17 is subject to Phosphoserine. The short motif at 46–55 is the VQ element; the sequence is FKQVVQLLTG. Residues 56 to 90 are disordered; that stretch reads IPKNPTHQPDPRFPPFHSIPPIKAVTNKKQSSSFR. Phosphoserine occurs at positions 73 and 128. Thr-131 carries the post-translational modification Phosphothreonine. The tract at residues 133 to 204 is disordered; it reads LMSDPFYRPG…HSPAPSPHDH (72 aa). Residues 143–152 show a composition bias toward low complexity; sequence SFSQSPSDSK. A phosphoserine mark is found at Ser-147 and Ser-173. Thr-177 and Thr-192 each carry phosphothreonine. Phosphoserine occurs at positions 196 and 200.

Post-translationally, phosphorylated on serine and threonine residues by MPK6.

The protein localises to the nucleus. May modulate WRKY transcription factor activities. In Arabidopsis thaliana (Mouse-ear cress), this protein is VQ motif-containing protein 13.